We begin with the raw amino-acid sequence, 80 residues long: Exodeoxyribonuclease 7 small subunit (80 aa).

It belongs to the XseB family. Heterooligomer composed of large and small subunits.

The protein resides in the cytoplasm. The enzyme catalyses Exonucleolytic cleavage in either 5'- to 3'- or 3'- to 5'-direction to yield nucleoside 5'-phosphates.. In terms of biological role, bidirectionally degrades single-stranded DNA into large acid-insoluble oligonucleotides, which are then degraded further into small acid-soluble oligonucleotides. This chain is Exodeoxyribonuclease 7 small subunit, found in Photobacterium profundum (strain SS9).